We begin with the raw amino-acid sequence, 151 residues long: FUN14 domain-containing protein 2 (151 aa).

Topologically, residues 1–42 (MAANSQGNFDGKFEALDLAELTKKQPWWRKLFGQESGPSAEK) are cytoplasmic. Residues 43 to 63 (YSVATQLVIGGVTGWCTGFVF) traverse the membrane as a helical segment. Residues 64–69 (QKVGKL) are Mitochondrial intermembrane-facing. The helical transmembrane segment at 70–90 (AATAVGGGFFLLQLANHTGYI) threads the bilayer. Residues 91–126 (KVDWQRVEKDMKKAKEQLKIRKNKQIPTEVKSKAEE) are Cytoplasmic-facing. A helical membrane pass occupies residues 127–147 (VVSFVKKNVLVTGGFFGGFLL). The Mitochondrial intermembrane portion of the chain corresponds to 148-151 (GMAS).

It belongs to the FUN14 family. In terms of tissue distribution, highly expressed in platelet (at protein level). Expressed in liver, brain, heart and muscle.

It localises to the mitochondrion outer membrane. It is found in the nucleus. Functionally, binds directly and specifically 1,2-Diacyl-sn-glycero-3-phospho-(1'-myo-inositol-3',4',5'-bisphosphate) (PIP3) leading to the recruitment of PIP3 to mitochondria and may play a role in the regulation of the platelet activation via AKT/GSK3B/cGMP signaling pathways. May act as transcription factor that regulates SREBP1 (isoform SREBP-1C) expression in order to modulate triglyceride (TG) homeostasis in hepatocytes. This Mus musculus (Mouse) protein is FUN14 domain-containing protein 2.